A 321-amino-acid polypeptide reads, in one-letter code: Putative ribose-phosphate pyrophosphokinase 2 (321 aa).

Residues 41–43 (DGE) and 100–101 (RQ) each bind ATP. Mg(2+) is bound at residue His134. Residues Asp223 and 227–231 (NTGVT) each bind D-ribose 5-phosphate.

The protein belongs to the ribose-phosphate pyrophosphokinase family. Class I subfamily. In terms of assembly, homohexamer. Mg(2+) serves as cofactor.

Its subcellular location is the cytoplasm. It catalyses the reaction D-ribose 5-phosphate + ATP = 5-phospho-alpha-D-ribose 1-diphosphate + AMP + H(+). The protein operates within metabolic intermediate biosynthesis; 5-phospho-alpha-D-ribose 1-diphosphate biosynthesis; 5-phospho-alpha-D-ribose 1-diphosphate from D-ribose 5-phosphate (route I): step 1/1. Its function is as follows. Involved in the biosynthesis of the central metabolite phospho-alpha-D-ribosyl-1-pyrophosphate (PRPP) via the transfer of pyrophosphoryl group from ATP to 1-hydroxyl of ribose-5-phosphate (Rib-5-P). In Lactococcus lactis subsp. lactis (strain IL1403) (Streptococcus lactis), this protein is Putative ribose-phosphate pyrophosphokinase 2.